The primary structure comprises 557 residues: Aerobic glycerol-3-phosphate dehydrogenase (557 aa).

21–49 (DLVIIGGGITGAGIALDASERGMKVALVE) contacts FAD.

Belongs to the FAD-dependent glycerol-3-phosphate dehydrogenase family. The cofactor is FAD.

It is found in the cytoplasm. The catalysed reaction is a quinone + sn-glycerol 3-phosphate = dihydroxyacetone phosphate + a quinol. It functions in the pathway polyol metabolism; glycerol degradation via glycerol kinase pathway; glycerone phosphate from sn-glycerol 3-phosphate (aerobic route): step 1/1. The protein is Aerobic glycerol-3-phosphate dehydrogenase (glpD) of Staphylococcus aureus (strain bovine RF122 / ET3-1).